The sequence spans 1095 residues: DNA-directed RNA polymerase subunit beta'' (1095 aa).

Zn(2+) is bound by residues cysteine 220, cysteine 293, cysteine 300, and cysteine 303.

Belongs to the RNA polymerase beta' chain family. RpoC2 subfamily. In terms of assembly, in plastids the minimal PEP RNA polymerase catalytic core is composed of four subunits: alpha, beta, beta', and beta''. When a (nuclear-encoded) sigma factor is associated with the core the holoenzyme is formed, which can initiate transcription. Requires Zn(2+) as cofactor.

The protein localises to the plastid. It localises to the chloroplast. The enzyme catalyses RNA(n) + a ribonucleoside 5'-triphosphate = RNA(n+1) + diphosphate. Its function is as follows. DNA-dependent RNA polymerase catalyzes the transcription of DNA into RNA using the four ribonucleoside triphosphates as substrates. This is DNA-directed RNA polymerase subunit beta'' from Zygnema circumcarinatum (Green alga).